The following is a 322-amino-acid chain: Polyisoprenyl-teichoic acid--peptidoglycan teichoic acid transferase TagT (322 aa).

The Cytoplasmic segment spans residues 1-19 (MEERSQRRKKKRKLKKWVK). Residues 20–40 (VVAGLMAFLVIAAGSVGAYAF) traverse the membrane as a helical; Signal-anchor for type II membrane protein segment. Topologically, residues 41 to 322 (VKLNNASKEA…KKELQNDLGV (282 aa)) are extracellular.

The protein belongs to the LytR/CpsA/Psr (LCP) family. As to quaternary structure, interacts with MreB.

The protein localises to the cell membrane. It functions in the pathway cell wall biogenesis. Its function is as follows. May catalyze the final step in cell wall teichoic acid biosynthesis, the transfer of the anionic cell wall polymers (APs) from their lipid-linked precursor to the cell wall peptidoglycan (PG). This chain is Polyisoprenyl-teichoic acid--peptidoglycan teichoic acid transferase TagT, found in Bacillus subtilis (strain 168).